The following is a 301-amino-acid chain: Probable alpha-L-glutamate ligase (301 aa).

Residues 104-287 (LQLLARKGIG…VATKVIEFIE (184 aa)) form the ATP-grasp domain. ATP-binding positions include Lys141, 178–179 (EF), Asp187, and 211–213 (RSN). The Mg(2+) site is built by Asp248, Glu260, and Asn262. Positions 248, 260, and 262 each coordinate Mn(2+).

It belongs to the RimK family. Mg(2+) is required as a cofactor. The cofactor is Mn(2+).

This is Probable alpha-L-glutamate ligase from Nitrosococcus oceani (strain ATCC 19707 / BCRC 17464 / JCM 30415 / NCIMB 11848 / C-107).